Here is a 408-residue protein sequence, read N- to C-terminus: LL-diaminopimelate aminotransferase (408 aa).

Residues tyrosine 15 and glycine 42 each coordinate substrate. Residues tyrosine 72, 108–109 (SK), tyrosine 132, asparagine 187, tyrosine 218, and 246–248 (SFS) each bind pyridoxal 5'-phosphate. Substrate is bound by residues lysine 109, tyrosine 132, and asparagine 187. An N6-(pyridoxal phosphate)lysine modification is found at lysine 249. The pyridoxal 5'-phosphate site is built by arginine 257 and asparagine 292. Asparagine 292 and arginine 388 together coordinate substrate.

Belongs to the class-I pyridoxal-phosphate-dependent aminotransferase family. LL-diaminopimelate aminotransferase subfamily. As to quaternary structure, homodimer. Pyridoxal 5'-phosphate is required as a cofactor.

It carries out the reaction (2S,6S)-2,6-diaminopimelate + 2-oxoglutarate = (S)-2,3,4,5-tetrahydrodipicolinate + L-glutamate + H2O + H(+). It functions in the pathway amino-acid biosynthesis; L-lysine biosynthesis via DAP pathway; LL-2,6-diaminopimelate from (S)-tetrahydrodipicolinate (aminotransferase route): step 1/1. Involved in the synthesis of meso-diaminopimelate (m-DAP or DL-DAP), required for both lysine and peptidoglycan biosynthesis. Catalyzes the direct conversion of tetrahydrodipicolinate to LL-diaminopimelate. This chain is LL-diaminopimelate aminotransferase, found in Prochlorococcus marinus (strain SARG / CCMP1375 / SS120).